A 187-amino-acid chain; its full sequence is 1,6-anhydro-N-acetylmuramyl-L-alanine amidase AmpD (187 aa).

Positions 29 to 167 (SLLVVHNISL…TPDRKTDPGP (139 aa)) constitute an N-acetylmuramoyl-L-alanine amidase domain. Residue His-34 coordinates Zn(2+). The active-site Proton acceptor is Glu-116. Residues His-154 and Asp-164 each coordinate Zn(2+).

Belongs to the N-acetylmuramoyl-L-alanine amidase 2 family. Requires Zn(2+) as cofactor.

The protein resides in the cytoplasm. It carries out the reaction Hydrolyzes the link between N-acetylmuramoyl residues and L-amino acid residues in certain cell-wall glycopeptides.. Involved in cell wall peptidoglycan recycling. Specifically cleaves the amide bond between the lactyl group of N-acetylmuramic acid and the alpha-amino group of the L-alanine in degradation products containing an anhydro N-acetylmuramyl moiety. The sequence is that of 1,6-anhydro-N-acetylmuramyl-L-alanine amidase AmpD (ampD) from Salmonella typhimurium (strain LT2 / SGSC1412 / ATCC 700720).